The chain runs to 375 residues: Pulmonary surfactant-associated protein D (375 aa).

Residues 1–21 (MLLFLLSALVLLTQSLGYLEA) form the signal peptide. Residues cysteine 35 and cysteine 40 each carry the S-nitrosocysteine modification. Positions 43–221 (VESGLPGRDG…DKGAKGESGL (179 aa)) are disordered. A Collagen-like domain is found at 46-222 (GLPGRDGRDG…KGAKGESGLP (177 aa)). Basic and acidic residues predominate over residues 50–65 (RDGRDGREGPRGEKGD). Residue proline 78 is modified to 4-hydroxyproline. Lysine 87 carries the post-translational modification 5-hydroxylysine. Residue asparagine 90 is glycosylated (N-linked (GlcNAc...) asparagine). Proline 96 is subject to 4-hydroxyproline. The residue at position 99 (lysine 99) is a 5-hydroxylysine. The span at 105-114 (SGPPGPPGVP) shows a compositional bias: pro residues. 2 stretches are compositionally biased toward low complexity: residues 116–132 (PAGR…IGPQ) and 138–150 (KGEA…VGAP). Proline 171 and proline 177 each carry 4-hydroxyproline. Positions 173–189 (ERGAPGNAGAAGSAGVM) are enriched in low complexity. Residues 204–216 (KGDKGVPGDKGAK) are compositionally biased toward basic and acidic residues. Positions 223–251 (DVASLRQQVEALQKQVQHLQAAFSQYKKV) form a coiled coil. Residues 260-374 (VGEKIFKTAG…CGEKRLVVCE (115 aa)) form the C-type lectin domain. Intrachain disulfides connect cysteine 281–cysteine 373 and cysteine 351–cysteine 365.

The protein belongs to the SFTPD family. As to quaternary structure, oligomeric complex of 4 set of homotrimers. In terms of processing, hydroxylation on proline residues within the sequence motif, GXPG, is most likely to be 4-hydroxy as this fits the requirement for 4-hydroxylation in vertebrates. S-nitrosylation at Cys-35 and Cys-40 alters the quaternary structure which results in a pro-inflammatory chemoattractive signaling activity with macrophages.

It is found in the secreted. It localises to the extracellular space. The protein localises to the extracellular matrix. The protein resides in the surface film. Its function is as follows. Contributes to the lung's defense against inhaled microorganisms, organic antigens and toxins. Interacts with compounds such as bacterial lipopolysaccharides, oligosaccharides and fatty acids and modulates leukocyte action in immune response. May participate in the extracellular reorganization or turnover of pulmonary surfactant. Binds strongly maltose residues and to a lesser extent other alpha-glucosyl moieties. The sequence is that of Pulmonary surfactant-associated protein D (SFTPD) from Macaca mulatta (Rhesus macaque).